The sequence spans 429 residues: Glutamyl-tRNA reductase (429 aa).

Residues 49–52 (TCNR), S108, 113–115 (EAQ), and Q119 each bind substrate. C50 functions as the Nucleophile in the catalytic mechanism. An NADP(+)-binding site is contributed by 188–193 (GAGEMS).

Belongs to the glutamyl-tRNA reductase family. In terms of assembly, homodimer.

It carries out the reaction (S)-4-amino-5-oxopentanoate + tRNA(Glu) + NADP(+) = L-glutamyl-tRNA(Glu) + NADPH + H(+). It participates in porphyrin-containing compound metabolism; protoporphyrin-IX biosynthesis; 5-aminolevulinate from L-glutamyl-tRNA(Glu): step 1/2. In terms of biological role, catalyzes the NADPH-dependent reduction of glutamyl-tRNA(Glu) to glutamate 1-semialdehyde (GSA). In Rubrobacter xylanophilus (strain DSM 9941 / JCM 11954 / NBRC 16129 / PRD-1), this protein is Glutamyl-tRNA reductase.